Reading from the N-terminus, the 122-residue chain is Small ribosomal subunit protein uS13 (122 aa).

The segment at 99 to 122 is disordered; sequence RGQRTHTNARTRKGPAKAIAGKKK.

Belongs to the universal ribosomal protein uS13 family. As to quaternary structure, part of the 30S ribosomal subunit. Forms a loose heterodimer with protein S19. Forms two bridges to the 50S subunit in the 70S ribosome.

In terms of biological role, located at the top of the head of the 30S subunit, it contacts several helices of the 16S rRNA. In the 70S ribosome it contacts the 23S rRNA (bridge B1a) and protein L5 of the 50S subunit (bridge B1b), connecting the 2 subunits; these bridges are implicated in subunit movement. Contacts the tRNAs in the A and P-sites. In Rhizobium leguminosarum bv. trifolii (strain WSM2304), this protein is Small ribosomal subunit protein uS13.